Reading from the N-terminus, the 367-residue chain is Nociceptin receptor (367 aa).

Over 1-45 (MESLFPAPYWEVLYGSHFQGNLSLLNETVPHHLLLNASHSAFLPL) the chain is Extracellular. N-linked (GlcNAc...) asparagine glycans are attached at residues Asn-21, Asn-26, and Asn-36. A helical membrane pass occupies residues 46 to 71 (GLKVTIVGLYLAVCIGGLLGNCLVMY). The Cytoplasmic portion of the chain corresponds to 72–84 (VILRHTKMKTATN). The helical transmembrane segment at 85–106 (IYIFNLALADTLVLLTLPFQGT) threads the bilayer. The Extracellular portion of the chain corresponds to 107–121 (DILLGFWPFGNALCK). Cys-120 and Cys-197 form a disulfide bridge. Residues 122 to 143 (TVIAIDYYNMFTSTFTLTAMSV) form a helical membrane-spanning segment. Over 144–162 (DRYVAICHPIRALDVRTSS) the chain is Cytoplasmic. A helical transmembrane segment spans residues 163–185 (KAQAVNVAIWALASVVGVPVAIM). Residues 186–208 (GSAQVEDEEIECLVEIPAPQDYW) are Extracellular-facing. A helical membrane pass occupies residues 209-233 (GPVFAICIFLFSFIIPVLIISVCYS). Over 234–261 (LMIRRLRGVRLLSGSREKDRNLRRITRL) the chain is Cytoplasmic. The chain crosses the membrane as a helical span at residues 262-282 (VLVVVAVFVGCWTPVQVFVLV). The Extracellular portion of the chain corresponds to 283-297 (QGLGVQPGSETAVAI). Residues 298 to 319 (LRFCTALGYVNSCLNPILYAFL) form a helical membrane-spanning segment. Residues 320–367 (DENFKACFRKFCCASSLHREMQVSDRVRSIAKDVGLGCKTSETVPRPA) are Cytoplasmic-facing. Cys-331 carries the S-palmitoyl cysteine lipid modification.

The protein belongs to the G-protein coupled receptor 1 family. In terms of processing, phosphorylation at Ser-360 requires GRK3. Highly expressed in several brain areas, the intestine, liver and spleen. Detected in sympathetic stellate ganglion neurons.

The protein resides in the cell membrane. The protein localises to the cytoplasmic vesicle. In terms of biological role, G-protein coupled opioid receptor that functions as a receptor for the endogenous neuropeptide nociceptin. Ligand binding causes a conformation change that triggers signaling via guanine nucleotide-binding proteins (G proteins) and modulates the activity of down-stream effectors. Signaling via G proteins mediates inhibition of adenylate cyclase activity and calcium channel activity. Arrestins modulate signaling via G proteins and mediate the activation of alternative signaling pathways that lead to the activation of MAP kinases. Plays a role in modulating nociception and the perception of pain. Plays a role in the regulation of locomotor activity by the neuropeptide nociceptin. The protein is Nociceptin receptor (Oprl1) of Rattus norvegicus (Rat).